A 101-amino-acid polypeptide reads, in one-letter code: uncharacterized protein (101 aa).

This is an uncharacterized protein from Sulfolobus islandicus filamentous virus (isolate Iceland/Hveragerdi) (SIFV).